A 158-amino-acid polypeptide reads, in one-letter code: Crossover junction endodeoxyribonuclease RuvC (158 aa).

Residues Asp7, Glu66, and Asp139 contribute to the active site. Residues Asp7, Glu66, and Asp139 each contribute to the Mg(2+) site.

Belongs to the RuvC family. In terms of assembly, homodimer which binds Holliday junction (HJ) DNA. The HJ becomes 2-fold symmetrical on binding to RuvC with unstacked arms; it has a different conformation from HJ DNA in complex with RuvA. In the full resolvosome a probable DNA-RuvA(4)-RuvB(12)-RuvC(2) complex forms which resolves the HJ. Mg(2+) is required as a cofactor.

It localises to the cytoplasm. It carries out the reaction Endonucleolytic cleavage at a junction such as a reciprocal single-stranded crossover between two homologous DNA duplexes (Holliday junction).. The RuvA-RuvB-RuvC complex processes Holliday junction (HJ) DNA during genetic recombination and DNA repair. Endonuclease that resolves HJ intermediates. Cleaves cruciform DNA by making single-stranded nicks across the HJ at symmetrical positions within the homologous arms, yielding a 5'-phosphate and a 3'-hydroxyl group; requires a central core of homology in the junction. The consensus cleavage sequence is 5'-(A/T)TT(C/G)-3'. Cleavage occurs on the 3'-side of the TT dinucleotide at the point of strand exchange. HJ branch migration catalyzed by RuvA-RuvB allows RuvC to scan DNA until it finds its consensus sequence, where it cleaves and resolves the cruciform DNA. In Campylobacter hominis (strain ATCC BAA-381 / DSM 21671 / CCUG 45161 / LMG 19568 / NCTC 13146 / CH001A), this protein is Crossover junction endodeoxyribonuclease RuvC.